The primary structure comprises 367 residues: 2-aminoethylphosphonate--pyruvate transaminase (367 aa).

Position 194 is an N6-(pyridoxal phosphate)lysine (K194).

The protein belongs to the class-V pyridoxal-phosphate-dependent aminotransferase family. PhnW subfamily. In terms of assembly, homodimer. Pyridoxal 5'-phosphate is required as a cofactor.

The catalysed reaction is (2-aminoethyl)phosphonate + pyruvate = phosphonoacetaldehyde + L-alanine. Functionally, involved in phosphonate degradation. This chain is 2-aminoethylphosphonate--pyruvate transaminase, found in Salmonella paratyphi B (strain ATCC BAA-1250 / SPB7).